A 682-amino-acid polypeptide reads, in one-letter code: Probable glycosyl transferase Gly (682 aa).

Residues 21-26 (CASFSD) and 112-113 (DC) contribute to the UDP site. Positions 112, 114, and 230 each coordinate Mn(2+). A UDP-binding site is contributed by 230 to 236 (HYLPERK).

It belongs to the glycosyltransferase 8 family. Part of the accessory SecA2/SecY2 protein translocation apparatus required to export cell wall protein GspB.

In terms of biological role, part of the accessory SecA2/SecY2 system specifically required to export GspB, a serine-rich repeat cell wall protein encoded upstream in the same operon. This is Probable glycosyl transferase Gly (gly) from Streptococcus gordonii.